We begin with the raw amino-acid sequence, 232 residues long: Ribonuclease P protein component 3 (232 aa).

The protein belongs to the eukaryotic/archaeal RNase P protein component 3 family. In terms of assembly, consists of a catalytic RNA component and at least 5 protein subunits.

The protein resides in the cytoplasm. It carries out the reaction Endonucleolytic cleavage of RNA, removing 5'-extranucleotides from tRNA precursor.. Its function is as follows. Part of ribonuclease P, a protein complex that generates mature tRNA molecules by cleaving their 5'-ends. The polypeptide is Ribonuclease P protein component 3 (Methanococcus maripaludis (strain DSM 14266 / JCM 13030 / NBRC 101832 / S2 / LL)).